The following is a 611-amino-acid chain: Sodium-coupled monocarboxylate transporter 1 (611 aa).

The Extracellular portion of the chain corresponds to 1 to 9 (MDASRDIGS). A helical membrane pass occupies residues 10 to 30 (FVVWDYVVFAGMLLISAAIGI). The Cytoplasmic segment spans residues 31–51 (YYAFAGGGQQTSKDFLMGGRS). Residues 52 to 72 (MSAVPVALSLTASFMSAVTVL) traverse the membrane as a helical segment. Topologically, residues 73 to 86 (GTPAEVYRFGAIFS) are extracellular. A helical membrane pass occupies residues 87–107 (IFVITYFFVVVISAEVFLPVF). Residues 108–132 (YRLGITSTYEYLELRFNRCIRLCGT) lie on the Cytoplasmic side of the membrane. The chain crosses the membrane as a helical span at residues 133–153 (ILFIVQTILYTGIVIYAPALA). At 154-161 (LNQVTGFD) the chain is on the extracellular side. Residues 162 to 182 (LWGAVVATGVVCTFYCTLGGL) traverse the membrane as a helical segment. Residues 183–184 (KA) lie on the Cytoplasmic side of the membrane. The chain crosses the membrane as a helical span at residues 185–205 (VVWTDVFQVGIMVAGFASVII). The Extracellular segment spans residues 206-239 (QASITQHGINKILSDAFNGGRLNFWNFDPNPLQR). The chain crosses the membrane as a helical span at residues 240–260 (HTFWTIVIGGTFTWTTIYGVN). Over 261–279 (QSQVQRYISCKSRLHAKLS) the chain is Cytoplasmic. Residues 280–300 (LYVNLVGLWVILTCSIFCGLA) traverse the membrane as a helical segment. Topologically, residues 301-336 (LYSRYRECDPWTSKKVSAIDQLMPYLVLDILKNYPG) are extracellular. The chain crosses the membrane as a helical span at residues 337 to 359 (VPGLFVACAYSGTLSTVSSSINA). At 360-389 (LAAVTVEDLIKPRFKSLSEKSLSWISQGMS) the chain is on the cytoplasmic side. Residues 390 to 410 (VLYGALCIGMAALASLMGALL) traverse the membrane as a helical segment. The Extracellular portion of the chain corresponds to 411 to 415 (QAALS). A helical membrane pass occupies residues 416–436 (IFGMVGGPLLGLFSLGILVPF). Over 437-439 (ANS) the chain is Cytoplasmic. Residues 440–460 (IGALTGLLAGFAISLWVGIGA) form a helical membrane-spanning segment. Over 461–518 (QLYPPLPERTLPLPLETYGCNITHNGSDWMSTTEMPFSTSAFQIHNAERTPLMDNWYS) the chain is Extracellular. The N-linked (GlcNAc...) asparagine glycan is linked to Asn485. The helical transmembrane segment at 519 to 539 (LSYLYFSTIGTLTTLFVGILI) threads the bilayer. At 540–611 (SLSTGGRKQN…HSGKINGTRL (72 aa)) the chain is on the cytoplasmic side. Residues 609–611 (TRL) carry the PDZ-binding motif.

The protein belongs to the sodium:solute symporter (SSF) (TC 2.A.21) family. Interacts (via PDZ-binding motif) with PDZK1 (via PDZ domains 1 and 3); interaction increases nicotinate transport activity of SLC5A8. Expressed in brain, colon, kidney and in the ileum and jejunum of small intestine. In the kidney, expression occurred in the proximal tubule and the loop of Henle, being restricted to tubular epithelial cells in both the cortex and the medulla. In the colon, predominantly expressed in the distal half of the large bowel and in the most terminal ileum. Localized selectively in the luminal surface of crypts in the large intestine and to the brush border in the middle parts of crypts in the cecum. In the brain, expression was seen throughout, exclusively in neurons, including the cortex, hippocampus, cerebellum and pituitary gland (at protein level). Expression is reduced in oligodendrogliomas.

Its subcellular location is the apical cell membrane. The enzyme catalyses (S)-lactate(out) + 2 Na(+)(out) = (S)-lactate(in) + 2 Na(+)(in). It carries out the reaction propanoate(out) + 2 Na(+)(out) = propanoate(in) + 2 Na(+)(in). The catalysed reaction is pyruvate(out) + 2 Na(+)(out) = pyruvate(in) + 2 Na(+)(in). It catalyses the reaction acetate(out) + 2 Na(+)(out) = acetate(in) + 2 Na(+)(in). The enzyme catalyses butanoate(out) + 2 Na(+)(out) = butanoate(in) + 2 Na(+)(in). It carries out the reaction nicotinate(out) + 2 Na(+)(out) = nicotinate(in) + 2 Na(+)(in). The catalysed reaction is (R)-3-hydroxybutanoate(out) + 2 Na(+)(out) = (R)-3-hydroxybutanoate(in) + 2 Na(+)(in). It catalyses the reaction acetoacetate(out) + 2 Na(+)(out) = acetoacetate(in) + 2 Na(+)(in). The enzyme catalyses 4-methyl-2-oxopentanoate(out) + 2 Na(+)(out) = 4-methyl-2-oxopentanoate(in) + 2 Na(+)(in). It carries out the reaction 5-oxo-L-proline(out) + 2 Na(+)(out) = 5-oxo-L-proline(in) + 2 Na(+)(in). The catalysed reaction is iodide(out) = iodide(in). It catalyses the reaction chloride(in) = chloride(out). The enzyme catalyses nitrate(in) = nitrate(out). It carries out the reaction bromide(in) = bromide(out). With respect to regulation, transport of D-lactate and pyruvate stimulated by alpha-cyano-4-hydroxycinnamic acid, but inhibited by the short-chain fatty acids acetate, propionate and butyrate. Acts as an electrogenic sodium (Na(+)) and chloride (Cl-)-dependent sodium-coupled solute transporter, including transport of monocarboxylates (short-chain fatty acids including L-lactate, D-lactate, pyruvate, acetate, propionate, valerate and butyrate), mocarboxylate drugs (nicotinate, benzoate, salicylate and 5-aminosalicylate) and ketone bodies (beta-D-hydroxybutyrate, acetoacetate and alpha-ketoisocaproate), with a Na(+):substrate stoichiometry of between 4:1 and 2:1. Catalyzes passive carrier mediated diffusion of iodide. Mediates iodide transport from the thyrocyte into the colloid lumen through the apical membrane. May be responsible for the absorption of D-lactate and monocarboxylate drugs from the intestinal tract. May play a critical role in the entry of L-lactate and ketone bodies into neurons by a process driven by an electrochemical Na(+) gradient and hence contribute to the maintenance of the energy status and function of neurons. Mediates sodium-coupled electrogenic transport of pyroglutamate (5-oxo-L-proline). Can mediate the transport of chloride, bromide, iodide and nitrate ions when external concentration of sodium ions is reduced. This is Sodium-coupled monocarboxylate transporter 1 from Mus musculus (Mouse).